The sequence spans 361 residues: BBSome complex member bbs-5 (361 aa).

The protein belongs to the BBS5 family. As to quaternary structure, part of BBSome complex, that contains at least bbs-1, bbs-2, bbs-4, bbs-5, osm-12, bbs-8/ttc-8 and bbs-9. Interacts with bbs-4 (via C-terminus); the interaction is direct.

It localises to the cell projection. The protein localises to the cilium membrane. It is found in the cytoplasm. The protein resides in the cytoskeleton. Its subcellular location is the cilium basal body. It localises to the microtubule organizing center. The protein localises to the centrosome. It is found in the centriolar satellite. In terms of biological role, component of the BBSome complex. The BBSome complex is thought to function as a coat complex required for sorting of specific membrane proteins to the primary cilia. The BBSome complex is required for ciliogenesis but is dispensable for centriolar satellite function. Required for BBSome complex ciliary localization but not for the proper complex assembly. Required, redundantly with bbs-4, for cilia biogenesis and both the assembly and movement of intraflagellar transport proteins along the ciliary axoneme. Plays a role in the removal of degraded mechanosensory receptors within the cilia. In Caenorhabditis elegans, this protein is BBSome complex member bbs-5.